The chain runs to 359 residues: Phospho-N-acetylmuramoyl-pentapeptide-transferase (359 aa).

The next 10 helical transmembrane spans lie at 3–23 (LILI…PALI), 55–75 (VAIL…GMAM), 80–100 (PSAS…VGFI), 117–137 (TAKT…ALQF), 156–176 (IATV…VVSA), 187–207 (LDGL…LITF), 231–251 (LALV…WNAA), 255–275 (IFMG…ISVT), 280–300 (ILAV…VVQI), and 334–354 (FWLL…GEWL).

It belongs to the glycosyltransferase 4 family. MraY subfamily. It depends on Mg(2+) as a cofactor.

The protein localises to the cell membrane. It catalyses the reaction UDP-N-acetyl-alpha-D-muramoyl-L-alanyl-gamma-D-glutamyl-meso-2,6-diaminopimeloyl-D-alanyl-D-alanine + di-trans,octa-cis-undecaprenyl phosphate = di-trans,octa-cis-undecaprenyl diphospho-N-acetyl-alpha-D-muramoyl-L-alanyl-D-glutamyl-meso-2,6-diaminopimeloyl-D-alanyl-D-alanine + UMP. Its pathway is cell wall biogenesis; peptidoglycan biosynthesis. Catalyzes the initial step of the lipid cycle reactions in the biosynthesis of the cell wall peptidoglycan: transfers peptidoglycan precursor phospho-MurNAc-pentapeptide from UDP-MurNAc-pentapeptide onto the lipid carrier undecaprenyl phosphate, yielding undecaprenyl-pyrophosphoryl-MurNAc-pentapeptide, known as lipid I. This is Phospho-N-acetylmuramoyl-pentapeptide-transferase from Mycolicibacterium smegmatis (strain ATCC 700084 / mc(2)155) (Mycobacterium smegmatis).